Here is a 275-residue protein sequence, read N- to C-terminus: Formamidopyrimidine-DNA glycosylase (275 aa).

P2 serves as the catalytic Schiff-base intermediate with DNA. The Proton donor role is filled by E3. K58 serves as the catalytic Proton donor; for beta-elimination activity. DNA is bound by residues H91 and R110. Residues 238–272 (QVYGQTGKSCPRCGQAIVKLKVGGRGTHICPKCQK) form an FPG-type zinc finger. Catalysis depends on R262, which acts as the Proton donor; for delta-elimination activity.

It belongs to the FPG family. Monomer. It depends on Zn(2+) as a cofactor.

The enzyme catalyses Hydrolysis of DNA containing ring-opened 7-methylguanine residues, releasing 2,6-diamino-4-hydroxy-5-(N-methyl)formamidopyrimidine.. It catalyses the reaction 2'-deoxyribonucleotide-(2'-deoxyribose 5'-phosphate)-2'-deoxyribonucleotide-DNA = a 3'-end 2'-deoxyribonucleotide-(2,3-dehydro-2,3-deoxyribose 5'-phosphate)-DNA + a 5'-end 5'-phospho-2'-deoxyribonucleoside-DNA + H(+). In terms of biological role, involved in base excision repair of DNA damaged by oxidation or by mutagenic agents. Acts as a DNA glycosylase that recognizes and removes damaged bases. Has a preference for oxidized purines, such as 7,8-dihydro-8-oxoguanine (8-oxoG). Has AP (apurinic/apyrimidinic) lyase activity and introduces nicks in the DNA strand. Cleaves the DNA backbone by beta-delta elimination to generate a single-strand break at the site of the removed base with both 3'- and 5'-phosphates. This Streptococcus pyogenes serotype M3 (strain ATCC BAA-595 / MGAS315) protein is Formamidopyrimidine-DNA glycosylase.